Reading from the N-terminus, the 764-residue chain is MAATLKSLKLLRYRALCSPSACGAARSVSYWNVSSKQHGGQDPPEHISLCHSAKRVKNICSTFSSRRILTTSSACPGLEFSKTSSSKASTLQLDSPRATRVDEEDVEVFDSFANIRVFLQLRPEYRVHSYNASETSQLLSVSESELILHKVTVYQNKLQAQVIVDYLCKLSSLPAEQHPVLLRSTSFALLCQLSVKKIQLFDTQDLINVLKAFVILGIPHSHSMLDVYETKCCHQVWEMSMDQLLLVADLWRYLGRKIPRFLNIFSSYLNLHWKDLSLSQLVHLIYVIGENRQVSQDLMQKLESLILKYIDLINLEEVGTICLGFFKSKTSLSEFVMRKIGDLACANMQHLSSHALVNIVKMFRFTHVDHINFMKQLGEIAPQRIPSLGVQGVMHLTLYCSALRFLDEGVMNAVAASLPCRVAHCRSKDVAKILWSFGTLNYKPPNAEEFYSSLINEIHRKMPEFNQYPEHLPTCLLGLAFSEYFPVELIDFALSPGFVRLAQERTKFNLIKELYTLDGTVGIECPDYRGNRLSTHLQQEGSEFLWNLAEKDMNSKPEFLETLFLLETMLGGPQYVKHHMILPHTRSSDLEVQLDVNLKPLPFNREATPAENVATLRLKHVGVSLTDDLMNQLLKGKARGHFQGKTESEPGQQPMELENKAAVPLGGFLCNVADKSGAMEMAGLCPSACMQTPGMKLAIQFTNRNQYCYGSRDLLGLHSMKRRQLARLGYRVVELSYWEWFPLLKRTRLEKLAFLHEKVFTSAL.

Phosphoserine is present on S95. K507 carries the post-translational modification N6-acetyllysine. In terms of domain architecture, RAP spans L697–E757.

It belongs to the FAST kinase family. Found in a complex with GRSF1, DDX28, DHX30 and FASTKD2. Associates with the 12S mitochondrial rRNA (12S mt-rRNA).

It is found in the mitochondrion matrix. The protein localises to the mitochondrion nucleoid. Plays an important role in the processing of non-canonical mitochondrial mRNA precursors. The polypeptide is FAST kinase domain-containing protein 5, mitochondrial (FASTKD5) (Macaca fascicularis (Crab-eating macaque)).